The sequence spans 137 residues: Large-conductance mechanosensitive channel (137 aa).

Transmembrane regions (helical) follow at residues 9 to 29 and 79 to 99; these read AFAV…GAAF and IQTI…VKAI.

The protein belongs to the MscL family. In terms of assembly, homopentamer.

It localises to the cell inner membrane. Functionally, channel that opens in response to stretch forces in the membrane lipid bilayer. May participate in the regulation of osmotic pressure changes within the cell. The protein is Large-conductance mechanosensitive channel of Pseudomonas paraeruginosa (strain DSM 24068 / PA7) (Pseudomonas aeruginosa (strain PA7)).